A 92-amino-acid polypeptide reads, in one-letter code: C-C motif chemokine 4 (92 aa).

The signal sequence occupies residues 1–23 (MKLCVTVLSLLVLVAAFCSPALS). 2 cysteine pairs are disulfide-bonded: Cys34–Cys58 and Cys35–Cys74.

It belongs to the intercrine beta (chemokine CC) family. In terms of assembly, homodimer. Interacts with CCR5.

The protein localises to the secreted. In terms of biological role, monokine with inflammatory and chemokinetic properties. This chain is C-C motif chemokine 4 (CCL4), found in Sus scrofa (Pig).